Here is a 62-residue protein sequence, read N- to C-terminus: UPF0434 protein RL4569 (62 aa).

The protein belongs to the UPF0434 family.

The polypeptide is UPF0434 protein RL4569 (Rhizobium johnstonii (strain DSM 114642 / LMG 32736 / 3841) (Rhizobium leguminosarum bv. viciae)).